We begin with the raw amino-acid sequence, 334 residues long: Protein U17/U16 (334 aa).

This sequence belongs to the herpesviridae US22 family.

Isoform 3 can transactivate the human immunodeficiency virus type 1 promoter. The protein is Protein U17/U16 (U17/U16) of Human herpesvirus 6A (strain Uganda-1102) (HHV-6 variant A).